A 303-amino-acid chain; its full sequence is Acetaldehyde dehydrogenase 1 (303 aa).

Catalysis depends on Cys-130, which acts as the Acyl-thioester intermediate. NAD(+) is bound by residues 161–169 and Asn-272; that span reads SVGPGTRKN.

The protein belongs to the acetaldehyde dehydrogenase family.

It catalyses the reaction acetaldehyde + NAD(+) + CoA = acetyl-CoA + NADH + H(+). The polypeptide is Acetaldehyde dehydrogenase 1 (Cupriavidus metallidurans (strain ATCC 43123 / DSM 2839 / NBRC 102507 / CH34) (Ralstonia metallidurans)).